The following is a 226-amino-acid chain: MAADYPNIDIAPFIDHALLTPTATPEQVDQWCEQADRYNFASVCLYPTYVKQAAEFLHGKKPKVCTVIGFPTGATTRSVKLYEALEAVENGATELDVVINLGCLKSGNTEAVHREIAEICEETGQVVKVILETNLLTDAEKKIAADIAMDAGATFLKTNTGWNGGATVADVRLLKEITRERVGIKASGGIRTLNQALDLILAGATRLGTSRGIDLIHQRDNPEKVE.

Residue aspartate 96 is the Proton donor/acceptor of the active site. Lysine 157 acts as the Schiff-base intermediate with acetaldehyde in catalysis. The active-site Proton donor/acceptor is lysine 185.

The protein belongs to the DeoC/FbaB aldolase family. DeoC type 1 subfamily.

It is found in the cytoplasm. The catalysed reaction is 2-deoxy-D-ribose 5-phosphate = D-glyceraldehyde 3-phosphate + acetaldehyde. Its pathway is carbohydrate degradation; 2-deoxy-D-ribose 1-phosphate degradation; D-glyceraldehyde 3-phosphate and acetaldehyde from 2-deoxy-alpha-D-ribose 1-phosphate: step 2/2. Functionally, catalyzes a reversible aldol reaction between acetaldehyde and D-glyceraldehyde 3-phosphate to generate 2-deoxy-D-ribose 5-phosphate. This chain is Deoxyribose-phosphate aldolase, found in Trichormus variabilis (strain ATCC 29413 / PCC 7937) (Anabaena variabilis).